The following is a 187-amino-acid chain: Elongation factor P (187 aa).

It belongs to the elongation factor P family.

The protein resides in the cytoplasm. The protein operates within protein biosynthesis; polypeptide chain elongation. Involved in peptide bond synthesis. Stimulates efficient translation and peptide-bond synthesis on native or reconstituted 70S ribosomes in vitro. Probably functions indirectly by altering the affinity of the ribosome for aminoacyl-tRNA, thus increasing their reactivity as acceptors for peptidyl transferase. The protein is Elongation factor P of Rhodospirillum rubrum (strain ATCC 11170 / ATH 1.1.1 / DSM 467 / LMG 4362 / NCIMB 8255 / S1).